We begin with the raw amino-acid sequence, 98 residues long: DNA-binding protein HU (98 aa).

Belongs to the bacterial histone-like protein family. Homodimer.

In terms of biological role, histone-like DNA-binding protein which is capable of wrapping DNA to stabilize it, and thus to prevent its denaturation under extreme environmental conditions. In Campylobacter jejuni subsp. jejuni serotype O:2 (strain ATCC 700819 / NCTC 11168), this protein is DNA-binding protein HU (hup).